We begin with the raw amino-acid sequence, 339 residues long: Glyceraldehyde-3-phosphate dehydrogenase (339 aa).

Residues 13–14 (RI), Asp-35, and Lys-84 contribute to the NAD(+) site. D-glyceraldehyde 3-phosphate contacts are provided by residues 156–158 (SCT), Thr-187, 216–217 (TG), and Arg-239. Catalysis depends on Cys-157, which acts as the Nucleophile. Asn-321 is a binding site for NAD(+).

Belongs to the glyceraldehyde-3-phosphate dehydrogenase family. Homotetramer.

Its subcellular location is the cytoplasm. It carries out the reaction D-glyceraldehyde 3-phosphate + phosphate + NAD(+) = (2R)-3-phospho-glyceroyl phosphate + NADH + H(+). It participates in carbohydrate degradation; glycolysis; pyruvate from D-glyceraldehyde 3-phosphate: step 1/5. In Onchocerca volvulus, this protein is Glyceraldehyde-3-phosphate dehydrogenase.